We begin with the raw amino-acid sequence, 303 residues long: Glutamyl-Q tRNA(Asp) synthetase (303 aa).

Residues arginine 16–serine 20 and glutamate 52 contribute to the L-glutamate site. A 'HIGH' region motif is present at residues proline 19–serine 29. Residues cysteine 108, cysteine 110, tyrosine 122, and cysteine 126 each coordinate Zn(2+). L-glutamate is bound by residues tyrosine 177 and arginine 195. Positions lysine 233–glutamine 237 match the 'KMSKS' region motif. ATP is bound at residue lysine 236.

It belongs to the class-I aminoacyl-tRNA synthetase family. GluQ subfamily. It depends on Zn(2+) as a cofactor.

Its function is as follows. Catalyzes the tRNA-independent activation of glutamate in presence of ATP and the subsequent transfer of glutamate onto a tRNA(Asp). Glutamate is transferred on the 2-amino-5-(4,5-dihydroxy-2-cyclopenten-1-yl) moiety of the queuosine in the wobble position of the QUC anticodon. The sequence is that of Glutamyl-Q tRNA(Asp) synthetase from Vibrio vulnificus (strain CMCP6).